The chain runs to 198 residues: Nucleoid occlusion factor SlmA (198 aa).

The HTH tetR-type domain occupies 10–70 (NRREEILQSL…SLIEFIEDSL (61 aa)). A DNA-binding region (H-T-H motif) is located at residues 33-52 (TTAKLAASVGVSEAALYRHF). Residues 117 to 144 (EQDRLQGRINQLFERIEAQLRQVLREKR) are a coiled coil.

It belongs to the nucleoid occlusion factor SlmA family. As to quaternary structure, homodimer. Interacts with FtsZ.

The protein resides in the cytoplasm. It is found in the nucleoid. Its function is as follows. Required for nucleoid occlusion (NO) phenomenon, which prevents Z-ring formation and cell division over the nucleoid. Acts as a DNA-associated cell division inhibitor that binds simultaneously chromosomal DNA and FtsZ, and disrupts the assembly of FtsZ polymers. SlmA-DNA-binding sequences (SBS) are dispersed on non-Ter regions of the chromosome, preventing FtsZ polymerization at these regions. The sequence is that of Nucleoid occlusion factor SlmA from Citrobacter koseri (strain ATCC BAA-895 / CDC 4225-83 / SGSC4696).